The sequence spans 332 residues: MTASAHDPAREAIETIRARVFAFPKRHFLSAGDLNAPQAADLLDLADAFVALNRQTSKTLDILKGRTLMNLFFENSTRTQSSFELAGKRLGADVVNMNPKTSSVAKGETLIDTAVTLNAMRPDLLVVRHASSGAASLLSQKVSGHVVNAGDGQHEHPTQALLDALSIRRAFGRVSGLTVAICGDVLHSRVARSNVALLHTLGASVRLVGPPTLMPAQAERWGVAVHHDMKSGLAGADVVMMLRLQLERMQGAFVPSTREYFRFYGLDREKLSRAAPGAKVMHPGPMNRGVEIDSDVADDPAVSLIQDQVEMGVAARMAVLASLAARIEGAGR.

Positions 78 and 79 each coordinate carbamoyl phosphate. Lys-106 contributes to the L-aspartate binding site. 3 residues coordinate carbamoyl phosphate: Arg-128, His-156, and Gln-159. L-aspartate contacts are provided by Arg-189 and Arg-243. The carbamoyl phosphate site is built by Gly-284 and Pro-285.

This sequence belongs to the aspartate/ornithine carbamoyltransferase superfamily. ATCase family. In terms of assembly, heterododecamer (2C3:3R2) of six catalytic PyrB chains organized as two trimers (C3), and six regulatory PyrI chains organized as three dimers (R2).

The enzyme catalyses carbamoyl phosphate + L-aspartate = N-carbamoyl-L-aspartate + phosphate + H(+). It participates in pyrimidine metabolism; UMP biosynthesis via de novo pathway; (S)-dihydroorotate from bicarbonate: step 2/3. Catalyzes the condensation of carbamoyl phosphate and aspartate to form carbamoyl aspartate and inorganic phosphate, the committed step in the de novo pyrimidine nucleotide biosynthesis pathway. The polypeptide is Aspartate carbamoyltransferase catalytic subunit (Caulobacter vibrioides (strain ATCC 19089 / CIP 103742 / CB 15) (Caulobacter crescentus)).